The sequence spans 202 residues: N-(5'-phosphoribosyl)anthranilate isomerase (202 aa).

This sequence belongs to the TrpF family.

The catalysed reaction is N-(5-phospho-beta-D-ribosyl)anthranilate = 1-(2-carboxyphenylamino)-1-deoxy-D-ribulose 5-phosphate. Its pathway is amino-acid biosynthesis; L-tryptophan biosynthesis; L-tryptophan from chorismate: step 3/5. The sequence is that of N-(5'-phosphoribosyl)anthranilate isomerase from Listeria welshimeri serovar 6b (strain ATCC 35897 / DSM 20650 / CCUG 15529 / CIP 8149 / NCTC 11857 / SLCC 5334 / V8).